A 269-amino-acid chain; its full sequence is Meiotically up-regulated gene 43 protein (269 aa).

It localises to the mitochondrion. Its function is as follows. Has a role in meiosis. This is Meiotically up-regulated gene 43 protein (mug43) from Schizosaccharomyces pombe (strain 972 / ATCC 24843) (Fission yeast).